A 169-amino-acid polypeptide reads, in one-letter code: Crossover junction endodeoxyribonuclease RuvC (169 aa).

Catalysis depends on residues D12, E72, and D144. Positions 12, 72, and 144 each coordinate Mg(2+).

The protein belongs to the RuvC family. Homodimer which binds Holliday junction (HJ) DNA. The HJ becomes 2-fold symmetrical on binding to RuvC with unstacked arms; it has a different conformation from HJ DNA in complex with RuvA. In the full resolvosome a probable DNA-RuvA(4)-RuvB(12)-RuvC(2) complex forms which resolves the HJ. Mg(2+) is required as a cofactor.

The protein localises to the cytoplasm. The catalysed reaction is Endonucleolytic cleavage at a junction such as a reciprocal single-stranded crossover between two homologous DNA duplexes (Holliday junction).. Its function is as follows. The RuvA-RuvB-RuvC complex processes Holliday junction (HJ) DNA during genetic recombination and DNA repair. Endonuclease that resolves HJ intermediates. Cleaves cruciform DNA by making single-stranded nicks across the HJ at symmetrical positions within the homologous arms, yielding a 5'-phosphate and a 3'-hydroxyl group; requires a central core of homology in the junction. The consensus cleavage sequence is 5'-(A/T)TT(C/G)-3'. Cleavage occurs on the 3'-side of the TT dinucleotide at the point of strand exchange. HJ branch migration catalyzed by RuvA-RuvB allows RuvC to scan DNA until it finds its consensus sequence, where it cleaves and resolves the cruciform DNA. The polypeptide is Crossover junction endodeoxyribonuclease RuvC (Azorhizobium caulinodans (strain ATCC 43989 / DSM 5975 / JCM 20966 / LMG 6465 / NBRC 14845 / NCIMB 13405 / ORS 571)).